Here is a 304-residue protein sequence, read N- to C-terminus: Non-specific ribonucleoside hydrolase RihC (304 aa).

The active site involves His233.

This sequence belongs to the IUNH family. RihC subfamily.

Its function is as follows. Hydrolyzes both purine and pyrimidine ribonucleosides with a broad-substrate specificity. The protein is Non-specific ribonucleoside hydrolase RihC of Shigella dysenteriae serotype 1 (strain Sd197).